Here is a 355-residue protein sequence, read N- to C-terminus: UDP-N-acetylglucosamine--N-acetylmuramyl-(pentapeptide) pyrophosphoryl-undecaprenol N-acetylglucosamine transferase (355 aa).

UDP-N-acetyl-alpha-D-glucosamine-binding positions include Thr-15–Gly-17, Asn-127, Arg-163, Ser-191, Ile-244, Ala-263–Glu-268, and Gln-288.

This sequence belongs to the glycosyltransferase 28 family. MurG subfamily.

Its subcellular location is the cell inner membrane. It catalyses the reaction di-trans,octa-cis-undecaprenyl diphospho-N-acetyl-alpha-D-muramoyl-L-alanyl-D-glutamyl-meso-2,6-diaminopimeloyl-D-alanyl-D-alanine + UDP-N-acetyl-alpha-D-glucosamine = di-trans,octa-cis-undecaprenyl diphospho-[N-acetyl-alpha-D-glucosaminyl-(1-&gt;4)]-N-acetyl-alpha-D-muramoyl-L-alanyl-D-glutamyl-meso-2,6-diaminopimeloyl-D-alanyl-D-alanine + UDP + H(+). Its pathway is cell wall biogenesis; peptidoglycan biosynthesis. Its function is as follows. Cell wall formation. Catalyzes the transfer of a GlcNAc subunit on undecaprenyl-pyrophosphoryl-MurNAc-pentapeptide (lipid intermediate I) to form undecaprenyl-pyrophosphoryl-MurNAc-(pentapeptide)GlcNAc (lipid intermediate II). The sequence is that of UDP-N-acetylglucosamine--N-acetylmuramyl-(pentapeptide) pyrophosphoryl-undecaprenol N-acetylglucosamine transferase from Shigella flexneri serotype 5b (strain 8401).